An 876-amino-acid chain; its full sequence is Alanine--tRNA ligase (876 aa).

4 residues coordinate Zn(2+): histidine 564, histidine 568, cysteine 666, and histidine 670.

It belongs to the class-II aminoacyl-tRNA synthetase family. As to quaternary structure, homotetramer. The cofactor is Zn(2+).

The protein localises to the cytoplasm. It carries out the reaction tRNA(Ala) + L-alanine + ATP = L-alanyl-tRNA(Ala) + AMP + diphosphate. Functionally, catalyzes the attachment of alanine to tRNA(Ala) in a two-step reaction: alanine is first activated by ATP to form Ala-AMP and then transferred to the acceptor end of tRNA(Ala). Also edits incorrectly charged Ser-tRNA(Ala) and Gly-tRNA(Ala) via its editing domain. The protein is Alanine--tRNA ligase of Salmonella paratyphi A (strain ATCC 9150 / SARB42).